The following is a 523-amino-acid chain: Butyrophilin subfamily 2 member A2 (523 aa).

The first 32 residues, 1-32 (MEPAAALHFSLPASLLLLLLLLLLSLCALVSA), serve as a signal peptide directing secretion. The Extracellular segment spans residues 33–265 (QFTVVGPANP…AVILTASPWM (233 aa)). One can recognise an Ig-like V-type domain in the interval 34-145 (FTVVGPANPI…SYDEAILRLV (112 aa)). N-linked (GlcNAc...) asparagine glycans are attached at residues asparagine 50, asparagine 118, asparagine 220, and asparagine 226. The cysteines at positions 55 and 129 are disulfide-linked. An Ig-like C2-type domain is found at 153–234 (PLIEIKAQED…VNNTLLGQEK (82 aa)). Residues 266–286 (VSMTVILAVFIIFMAVSICCI) form a helical membrane-spanning segment. The stretch at 286-321 (IKKLQREKKILSGEKKVEQEEKEIAQQLQEELRWRR) forms a coiled coil. The Cytoplasmic portion of the chain corresponds to 287 to 523 (KKLQREKKIL…LHRVGTHQSL (237 aa)). The 194-residue stretch at 309–502 (IAQQLQEELR…IFICPALTGA (194 aa)) folds into the B30.2/SPRY domain.

It belongs to the immunoglobulin superfamily. BTN/MOG family. N-glycosylated. In terms of tissue distribution, highly expressed in brain, bone marrow, small intestine, muscle, spleen and pancreas. Moderate expression was seen in lung, liver and kidney.

The protein resides in the membrane. Functionally, inhibits the proliferation of CD4 and CD8 T-cells activated by anti-CD3 antibodies, T-cell metabolism and IL2 and IFNG secretion. In Homo sapiens (Human), this protein is Butyrophilin subfamily 2 member A2 (BTN2A2).